We begin with the raw amino-acid sequence, 389 residues long: Leucine aminopeptidase 1 (389 aa).

A signal peptide spans 1 to 18; the sequence is MKSAALLLPLYAAAFAAA. A propeptide spanning residues 19–89 is cleaved from the precursor; that stretch reads AFHHEHAQAV…TLKRRINAAS (71 aa). N-linked (GlcNAc...) asparagine glycosylation is present at asparagine 99. The Zn(2+) site is built by histidine 188, aspartate 207, glutamate 246, and aspartate 273. The cysteines at positions 322 and 326 are disulfide-linked. Zn(2+) is bound at residue histidine 355.

Belongs to the peptidase M28 family. M28E subfamily. Monomer. Zn(2+) serves as cofactor.

The protein resides in the secreted. Its function is as follows. Extracellular aminopeptidase that allows assimilation of proteinaceous substrates. The chain is Leucine aminopeptidase 1 (lap1) from Pyrenophora teres f. teres (strain 0-1) (Barley net blotch fungus).